The following is a 234-amino-acid chain: Phosphoribosylaminoimidazole-succinocarboxamide synthase (234 aa).

This sequence belongs to the SAICAR synthetase family.

It catalyses the reaction 5-amino-1-(5-phospho-D-ribosyl)imidazole-4-carboxylate + L-aspartate + ATP = (2S)-2-[5-amino-1-(5-phospho-beta-D-ribosyl)imidazole-4-carboxamido]succinate + ADP + phosphate + 2 H(+). It participates in purine metabolism; IMP biosynthesis via de novo pathway; 5-amino-1-(5-phospho-D-ribosyl)imidazole-4-carboxamide from 5-amino-1-(5-phospho-D-ribosyl)imidazole-4-carboxylate: step 1/2. The sequence is that of Phosphoribosylaminoimidazole-succinocarboxamide synthase from Staphylococcus carnosus (strain TM300).